The chain runs to 623 residues: MTIRHLSETIINQIAAGEVIERPASVIKELVENAIDAGATRIEVVTAGGGKTLLRVTDNGSGIPADELALAVSRHCTSKLTDDVHDIRALGFRGEALPSIGSVSKLTLKSRPQDADSGFEVCVTGGHLDGPRPTALNRGTIVEVRDLFYATPARLKFMKTDRAEATAITDVVKRIGIAFPHIRFSLAGTDRTPFEMPATGTGAEATLERIGQVLGREFGENALAIDAERDGVRLAGFVGIPSFNRGNALHQFAYVNGRPVRDKQIFGALRGAYSDVIARDRHPVAVLFLTLDPALVDVNVHPAKADVRFRDPGLVRGLIVGAIKQALAQSGIRPATSGAEAMLQAFRAEGFGAQQSAPRPANSYSPASWRTAPPAPRSEWSPQTAQTAHRPLDLQAAPALRENGQAVLGDVAVPASDARASVAEAPVELMQKPLGAARAQIHENYIVAQTEDSLVIVDQHAAHERLVYEALKNALHARPIAGQMLLIPEIVDLPEEDAQRLAGHAETLARFGLGVEQFGPGAIAVRETPAMLGEMNVQQLIRDLADEIAEHDTADGLKAMLHHVAATMACHGSVRSGRRLKPEEMNALLRDMEATPGSGTCNHGRPTYIELKLTDIERLFGRR.

Over residues Ala-353–Ser-368 the composition is skewed to polar residues. Residues Ala-353 to His-389 are disordered.

Belongs to the DNA mismatch repair MutL/HexB family.

This protein is involved in the repair of mismatches in DNA. It is required for dam-dependent methyl-directed DNA mismatch repair. May act as a 'molecular matchmaker', a protein that promotes the formation of a stable complex between two or more DNA-binding proteins in an ATP-dependent manner without itself being part of a final effector complex. This chain is DNA mismatch repair protein MutL, found in Brucella melitensis biotype 2 (strain ATCC 23457).